The primary structure comprises 147 residues: Large ribosomal subunit protein uL13 (147 aa).

The interval 126-147 (AGPTHPHQAQQPVPYEIKQVAQ) is disordered.

The protein belongs to the universal ribosomal protein uL13 family. In terms of assembly, part of the 50S ribosomal subunit.

This protein is one of the early assembly proteins of the 50S ribosomal subunit, although it is not seen to bind rRNA by itself. It is important during the early stages of 50S assembly. The protein is Large ribosomal subunit protein uL13 of Parafrankia sp. (strain EAN1pec).